The chain runs to 474 residues: Protein NAR1 (474 aa).

Positions 24, 61, 64, 67, 177, 233, 390, and 394 each coordinate [4Fe-4S] cluster.

Belongs to the NARF family. Part of a complex composed of AE7, CIA1, MMS19 and NAR1. Interacts with CIA1. Expressed in developing tissues, including shoot apex, young leaves, vascular tissues, root tips, pedicels, carpels and developing seeds.

Its subcellular location is the nucleus. The protein resides in the cytoplasm. Its function is as follows. Essential component of the cytosolic iron-sulfur (Fe-S) protein assembly (CIA) machinery. Required for the maturation of extramitochondrial Fe/S proteins. Required for expression of the imprinted FWA gene, for seed development and is involved in the oxidative stress response in vegetative tissues. Involved in the regulation of cell size, ploidy and cell cycle progression. Required for growth under normoxic conditions and necessary for recovery after hypoxic treatment but its action is reactive oxygen species (ROS) independent. This is Protein NAR1 from Arabidopsis thaliana (Mouse-ear cress).